The sequence spans 475 residues: Sulfate adenylyltransferase subunit 1 (475 aa).

The region spanning Lys-25–Arg-239 is the tr-type G domain. The G1 stretch occupies residues Gly-34 to Ser-41. Gly-34–Ser-41 serves as a coordination point for GTP. The interval Gly-92–Asp-96 is G2. Residues Asp-113–Gly-116 are G3. Residues Asp-113–His-117 and Asn-168–Asp-171 each bind GTP. The segment at Asn-168–Asp-171 is G4. Residues Ser-206–Leu-208 form a G5 region.

It belongs to the TRAFAC class translation factor GTPase superfamily. Classic translation factor GTPase family. CysN/NodQ subfamily. In terms of assembly, heterodimer composed of CysD, the smaller subunit, and CysN.

It carries out the reaction sulfate + ATP + H(+) = adenosine 5'-phosphosulfate + diphosphate. It functions in the pathway sulfur metabolism; hydrogen sulfide biosynthesis; sulfite from sulfate: step 1/3. Functionally, with CysD forms the ATP sulfurylase (ATPS) that catalyzes the adenylation of sulfate producing adenosine 5'-phosphosulfate (APS) and diphosphate, the first enzymatic step in sulfur assimilation pathway. APS synthesis involves the formation of a high-energy phosphoric-sulfuric acid anhydride bond driven by GTP hydrolysis by CysN coupled to ATP hydrolysis by CysD. In Escherichia coli (strain 55989 / EAEC), this protein is Sulfate adenylyltransferase subunit 1.